Consider the following 400-residue polypeptide: AA13 family lytic polysaccharide monooxygenase A (400 aa).

An N-terminal signal peptide occupies residues 1–17; it reads MLLTVLAVVGCFTAVNG. His-18 contributes to the Cu(2+) binding site. His-18 is subject to Methylhistidine. Residues 18–247 enclose the Chitin-binding type-4 domain; it reads HGYLTIPASR…AQVYLHCADI (230 aa). Intrachain disulfides connect Cys-39-Cys-42, Cys-65-Cys-244, Cys-101-Cys-202, Cys-117-Cys-144, Cys-152-Cys-160, Cys-166-Cys-172, and Cys-180-Cys-191. His-108 contributes to the Cu(2+) binding site. The N-linked (GlcNAc...) asparagine glycan is linked to Asn-119. Tyr-241 is a Cu(2+) binding site. Positions 254-287 are disordered; that stretch reads GGTTSKSTTSTTSTTSTSRSTSTSAPTTTSSAST. Positions 257 to 287 are enriched in low complexity; it reads TSKSTTSTTSTTSTSRSTSTSAPTTTSSAST. Positions 293–400 constitute a CBM20 domain; that stretch reads TTQASLIPVT…TTATAAASWR (108 aa). Asn-379 is a glycosylation site (N-linked (GlcNAc...) asparagine).

It belongs to the polysaccharide monooxygenase AA13 family. Cu(2+) serves as cofactor. In terms of processing, O-mannosylated.

It is found in the secreted. The catalysed reaction is starch + reduced acceptor + O2 = D-glucono-1,5-lactone-terminated malto-oligosaccharides + short-chain malto-oligosaccharides + acceptor + H2O.. Its activity is regulated as follows. Activity is inhibited by both beta-cyclodextrin or amylose that block the access to the active site. Starch-active lytic polysaccharide monooxygenase that oxidizes the C1 position of starch substrates. Catalysis by LPMOs requires the reduction of the active-site copper from Cu(II) to Cu(I) by a reducing agent and H(2)O(2) or O(2) as a cosubstrate. The sequence is that of AA13 family lytic polysaccharide monooxygenase A from Aspergillus terreus (strain NIH 2624 / FGSC A1156).